A 345-amino-acid polypeptide reads, in one-letter code: Acyl-CoA--sterol O-acyltransferase 1 (345 aa).

Transmembrane regions (helical) follow at residues 1 to 21, 32 to 52, 54 to 74, 86 to 106, 120 to 140, 148 to 168, 231 to 251, 258 to 278, and 291 to 311; these read MASF…TFFI, LILF…IYSL, LLGI…LLFA, PLSL…QLSP, GPLI…AYEY, VVLT…LAAT, ILAA…IFFY, DWKM…EIAI, and AISQ…LFLP.

The protein belongs to the wax synthase family.

It is found in the membrane. In terms of biological role, involved in the esterification of cycloartenol. Not implicated in the formation of sterol esters in flowers or during seed maturation. Has a substrate preference toward saturated fatty acyl donors (16:0 &gt; 18:0 &gt; 16:1 &gt; 18:1). Does not require triacyglycerols (TAGs) as a fatty acyl donor, and is unable to acylate diacylglycerol to produce TAG. This is Acyl-CoA--sterol O-acyltransferase 1 (ASAT1) from Arabidopsis thaliana (Mouse-ear cress).